A 349-amino-acid polypeptide reads, in one-letter code: Green-sensitive opsin-3 (349 aa).

Over 1 to 36 the chain is Extracellular; the sequence is MNGTEGNNFYIPMSNRTGLVRSPYEYPQYYLAEPWQ. N-linked (GlcNAc...) asparagine glycans are attached at residues N2 and N15. A helical membrane pass occupies residues 37-61; that stretch reads FKLLAVYMFFLMCFGFPINGLTLVV. The Cytoplasmic portion of the chain corresponds to 62–73; that stretch reads TAQHKKLRQPLN. Residues 74–99 traverse the membrane as a helical segment; sequence FILVNLAVAGTIMVCFGFTVTFYTAI. The Extracellular portion of the chain corresponds to 100 to 113; that stretch reads NGYFVLGPTGCAIE. Cysteines 110 and 187 form a disulfide. The chain crosses the membrane as a helical span at residues 114–133; that stretch reads GFMATLGGQISLWSLVVLAI. The Cytoplasmic portion of the chain corresponds to 134-152; the sequence is ERYIVVCKPMGSFKFSSNH. Residues 153 to 176 form a helical membrane-spanning segment; that stretch reads AFAGIGFTWIMALSCAAPPLVGWS. Topologically, residues 177-202 are extracellular; that stretch reads RYIPEGMQCSCGPDYYTLNPDYNNES. N200 is a glycosylation site (N-linked (GlcNAc...) asparagine). The chain crosses the membrane as a helical span at residues 203–230; that stretch reads YVLYMFCCHFIFPVTTIFFTYGRLVCTV. Over 231–252 the chain is Cytoplasmic; the sequence is KAAAAQQQESESTQKAEREVTR. A helical transmembrane segment spans residues 253-276; sequence MVILMVLGFLVAWTPYASVAAWIF. The Extracellular portion of the chain corresponds to 277–284; that stretch reads FNRGAAFS. Residues 285-309 form a helical membrane-spanning segment; it reads AQFMAVPAFFSKSSSIFNPIIYVLL. The residue at position 296 (K296) is an N6-(retinylidene)lysine. Over 310–349 the chain is Cytoplasmic; the sequence is NKQFRNCMLTTLFCGKNPLGDDESSTVSTSKTEVSSVSPA. Positions 329–349 are disordered; that stretch reads GDDESSTVSTSKTEVSSVSPA. Over residues 334–349 the composition is skewed to low complexity; that stretch reads STVSTSKTEVSSVSPA.

It belongs to the G-protein coupled receptor 1 family. Opsin subfamily. In terms of processing, phosphorylated on some or all of the serine and threonine residues present in the C-terminal region.

The protein localises to the membrane. In terms of biological role, visual pigments are the light-absorbing molecules that mediate vision. They consist of an apoprotein, opsin, covalently linked to cis-retinal. This chain is Green-sensitive opsin-3 (opn1mw3), found in Danio rerio (Zebrafish).